We begin with the raw amino-acid sequence, 239 residues long: tRNA (guanine-N(7)-)-methyltransferase (239 aa).

The S-adenosyl-L-methionine site is built by Glu-69, Glu-94, Asp-121, and Asp-144. Asp-144 is a catalytic residue. Residue Lys-148 coordinates substrate. The tract at residues Arg-150 to Arg-155 is interaction with RNA. Substrate is bound by residues Asp-180 and Thr-217–Glu-220.

Belongs to the class I-like SAM-binding methyltransferase superfamily. TrmB family. Monomer.

It catalyses the reaction guanosine(46) in tRNA + S-adenosyl-L-methionine = N(7)-methylguanosine(46) in tRNA + S-adenosyl-L-homocysteine. The protein operates within tRNA modification; N(7)-methylguanine-tRNA biosynthesis. Functionally, catalyzes the formation of N(7)-methylguanine at position 46 (m7G46) in tRNA. The polypeptide is tRNA (guanine-N(7)-)-methyltransferase (Shigella dysenteriae serotype 1 (strain Sd197)).